The chain runs to 548 residues: Elongator complex protein 3 (548 aa).

In terms of domain architecture, Radical SAM core spans R83–P373. [4Fe-4S] cluster is bound by residues C100, C110, and C113. Acetyl-CoA contacts are provided by residues K165, E475–V478, F498–M500, and Y531. Residues T397–Y548 enclose the N-acetyltransferase domain.

Belongs to the ELP3 family. In terms of assembly, component of the elongator complex. Requires [4Fe-4S] cluster as cofactor.

It is found in the cytoplasm. It localises to the nucleus. It carries out the reaction uridine(34) in tRNA + acetyl-CoA + S-adenosyl-L-methionine + H2O = 5-(carboxymethyl)uridine(34) in tRNA + 5'-deoxyadenosine + L-methionine + CoA + 2 H(+). It functions in the pathway tRNA modification; 5-methoxycarbonylmethyl-2-thiouridine-tRNA biosynthesis. In terms of biological role, catalytic tRNA acetyltransferase subunit of the elongator complex which is required for multiple tRNA modifications, including mcm5U (5-methoxycarbonylmethyl uridine), mcm5s2U (5-methoxycarbonylmethyl-2-thiouridine), and ncm5U (5-carbamoylmethyl uridine). In the elongator complex, acts as a tRNA uridine(34) acetyltransferase by mediating formation of carboxymethyluridine in the wobble base at position 34 in tRNAs. Involved in neurogenesis. Involved in somite development. This Danio rerio (Zebrafish) protein is Elongator complex protein 3.